The following is a 108-amino-acid chain: Cuticle protein AM1199 (108 aa).

Position 1 is a pyrrolidone carboxylic acid (Q1). In terms of domain architecture, Chitin-binding type R&amp;R spans D26–H91. O-linked (HexNAc) threonine glycosylation is present at T89.

In terms of tissue distribution, arthrodial membrane.

This Cancer pagurus (Rock crab) protein is Cuticle protein AM1199.